Reading from the N-terminus, the 520-residue chain is Phosphoenolpyruvate carboxykinase (ATP) (520 aa).

Arg61, Phe196, and Lys202 together coordinate substrate. ATP is bound by residues Lys202, His222, and 238–246; that span reads GLSGTGKTT. Lys202 and His222 together coordinate Mn(2+). Asp259 contacts Mn(2+). Residues Glu287, Arg324, 443–444, and Thr449 contribute to the ATP site; that span reads RI. Residue Arg324 participates in substrate binding.

It belongs to the phosphoenolpyruvate carboxykinase (ATP) family. The cofactor is Mn(2+).

It localises to the cytoplasm. It carries out the reaction oxaloacetate + ATP = phosphoenolpyruvate + ADP + CO2. It participates in carbohydrate biosynthesis; gluconeogenesis. In terms of biological role, involved in the gluconeogenesis. Catalyzes the conversion of oxaloacetate (OAA) to phosphoenolpyruvate (PEP) through direct phosphoryl transfer between the nucleoside triphosphate and OAA. The polypeptide is Phosphoenolpyruvate carboxykinase (ATP) (Amoebophilus asiaticus (strain 5a2)).